We begin with the raw amino-acid sequence, 256 residues long: Probable serine/threonine-protein kinase YbdM (256 aa).

The Protein kinase domain maps to 25 to 256 (YKIEECLGMG…DLNRAIQSVT (232 aa)). ATP is bound by residues 31–39 (LGMGGYGLV) and lysine 54. Residue aspartate 149 is the Proton acceptor of the active site.

The protein belongs to the protein kinase superfamily. Ser/Thr protein kinase family.

It carries out the reaction L-seryl-[protein] + ATP = O-phospho-L-seryl-[protein] + ADP + H(+). It catalyses the reaction L-threonyl-[protein] + ATP = O-phospho-L-threonyl-[protein] + ADP + H(+). In Bacillus subtilis (strain 168), this protein is Probable serine/threonine-protein kinase YbdM (ybdM).